Consider the following 272-residue polypeptide: Phosphatidylglycerol--prolipoprotein diacylglyceryl transferase (272 aa).

Helical transmembrane passes span Ile21–Ala41, Tyr60–Tyr80, Gly101–Ala121, and Val131–Gly151. A 1,2-diacyl-sn-glycero-3-phospho-(1'-sn-glycerol) is bound at residue Arg152. 3 helical membrane passes run Pro181–Tyr201, Gly209–Phe229, and Leu244–Val264.

This sequence belongs to the Lgt family.

Its subcellular location is the cell inner membrane. It carries out the reaction L-cysteinyl-[prolipoprotein] + a 1,2-diacyl-sn-glycero-3-phospho-(1'-sn-glycerol) = an S-1,2-diacyl-sn-glyceryl-L-cysteinyl-[prolipoprotein] + sn-glycerol 1-phosphate + H(+). The protein operates within protein modification; lipoprotein biosynthesis (diacylglyceryl transfer). Catalyzes the transfer of the diacylglyceryl group from phosphatidylglycerol to the sulfhydryl group of the N-terminal cysteine of a prolipoprotein, the first step in the formation of mature lipoproteins. In Aliarcobacter butzleri (strain RM4018) (Arcobacter butzleri), this protein is Phosphatidylglycerol--prolipoprotein diacylglyceryl transferase.